A 161-amino-acid polypeptide reads, in one-letter code: 6,7-dimethyl-8-ribityllumazine synthase (161 aa).

Residues phenylalanine 23, 61–63 (SFE), and 85–87 (AVI) contribute to the 5-amino-6-(D-ribitylamino)uracil site. Position 90–91 (90–91 (DT)) interacts with (2S)-2-hydroxy-3-oxobutyl phosphate. Residue histidine 93 is the Proton donor of the active site. 5-amino-6-(D-ribitylamino)uracil is bound at residue phenylalanine 118. Arginine 132 serves as a coordination point for (2S)-2-hydroxy-3-oxobutyl phosphate.

This sequence belongs to the DMRL synthase family.

It carries out the reaction (2S)-2-hydroxy-3-oxobutyl phosphate + 5-amino-6-(D-ribitylamino)uracil = 6,7-dimethyl-8-(1-D-ribityl)lumazine + phosphate + 2 H2O + H(+). It participates in cofactor biosynthesis; riboflavin biosynthesis; riboflavin from 2-hydroxy-3-oxobutyl phosphate and 5-amino-6-(D-ribitylamino)uracil: step 1/2. In terms of biological role, catalyzes the formation of 6,7-dimethyl-8-ribityllumazine by condensation of 5-amino-6-(D-ribitylamino)uracil with 3,4-dihydroxy-2-butanone 4-phosphate. This is the penultimate step in the biosynthesis of riboflavin. In Synechococcus sp. (strain WH7803), this protein is 6,7-dimethyl-8-ribityllumazine synthase.